A 347-amino-acid polypeptide reads, in one-letter code: N-acetyl-gamma-glutamyl-phosphate reductase (347 aa).

Cys152 is an active-site residue.

It belongs to the NAGSA dehydrogenase family. Type 1 subfamily.

Its subcellular location is the cytoplasm. The enzyme catalyses N-acetyl-L-glutamate 5-semialdehyde + phosphate + NADP(+) = N-acetyl-L-glutamyl 5-phosphate + NADPH + H(+). Its pathway is amino-acid biosynthesis; L-arginine biosynthesis; N(2)-acetyl-L-ornithine from L-glutamate: step 3/4. Its function is as follows. Catalyzes the NADPH-dependent reduction of N-acetyl-5-glutamyl phosphate to yield N-acetyl-L-glutamate 5-semialdehyde. The sequence is that of N-acetyl-gamma-glutamyl-phosphate reductase from Neisseria gonorrhoeae (strain NCCP11945).